The chain runs to 102 residues: Small ribosomal subunit protein uS10 (102 aa).

Positions 30-58 (TGVNLSGPIPLPTKTLEIPTRKSPDGEGT) are disordered.

This sequence belongs to the universal ribosomal protein uS10 family. As to quaternary structure, part of the 30S ribosomal subunit.

Involved in the binding of tRNA to the ribosomes. This Haloquadratum walsbyi (strain DSM 16790 / HBSQ001) protein is Small ribosomal subunit protein uS10.